Consider the following 550-residue polypeptide: Hydroxylamine reductase (550 aa).

[2Fe-2S] cluster is bound by residues C4, C7, C19, and C26. H249, E273, C317, C405, C433, C458, E492, and K494 together coordinate hybrid [4Fe-2O-2S] cluster. C405 is modified (cysteine persulfide).

It belongs to the HCP family. It depends on [2Fe-2S] cluster as a cofactor. Hybrid [4Fe-2O-2S] cluster serves as cofactor.

Its subcellular location is the cytoplasm. The enzyme catalyses A + NH4(+) + H2O = hydroxylamine + AH2 + H(+). Catalyzes the reduction of hydroxylamine to form NH(3) and H(2)O. In Aeromonas salmonicida (strain A449), this protein is Hydroxylamine reductase.